Here is a 136-residue protein sequence, read N- to C-terminus: Nucleoside diphosphate kinase (136 aa).

Positions 10, 58, 86, 92, 104, and 114 each coordinate ATP. Histidine 117 serves as the catalytic Pros-phosphohistidine intermediate.

The protein belongs to the NDK family. In terms of assembly, homotetramer. Mg(2+) serves as cofactor.

The protein resides in the cytoplasm. The catalysed reaction is a 2'-deoxyribonucleoside 5'-diphosphate + ATP = a 2'-deoxyribonucleoside 5'-triphosphate + ADP. It catalyses the reaction a ribonucleoside 5'-diphosphate + ATP = a ribonucleoside 5'-triphosphate + ADP. Major role in the synthesis of nucleoside triphosphates other than ATP. The ATP gamma phosphate is transferred to the NDP beta phosphate via a ping-pong mechanism, using a phosphorylated active-site intermediate. This chain is Nucleoside diphosphate kinase, found in Corynebacterium diphtheriae (strain ATCC 700971 / NCTC 13129 / Biotype gravis).